A 142-amino-acid polypeptide reads, in one-letter code: Hemoglobin subunit alpha-2 (142 aa).

The 141-residue stretch at 2–142 (VLSPADKTNV…VSTVLTSKYR (141 aa)) folds into the Globin domain. H59 lines the O2 pocket. Heme b is bound at residue H88.

It belongs to the globin family. Heterotetramer of two alpha chains and two beta chains. Red blood cells.

Its function is as follows. Involved in oxygen transport from the lung to the various peripheral tissues. Functionally, hemopressin acts as an antagonist peptide of the cannabinoid receptor CNR1. Hemopressin-binding efficiently blocks cannabinoid receptor CNR1 and subsequent signaling. This is Hemoglobin subunit alpha-2 (HBA2) from Hylobates lar (Lar gibbon).